Reading from the N-terminus, the 96-residue chain is Co-chaperonin GroES (96 aa).

It belongs to the GroES chaperonin family. As to quaternary structure, heptamer of 7 subunits arranged in a ring. Interacts with the chaperonin GroEL.

It is found in the cytoplasm. Its function is as follows. Together with the chaperonin GroEL, plays an essential role in assisting protein folding. The GroEL-GroES system forms a nano-cage that allows encapsulation of the non-native substrate proteins and provides a physical environment optimized to promote and accelerate protein folding. GroES binds to the apical surface of the GroEL ring, thereby capping the opening of the GroEL channel. This Nitrosococcus oceani (strain ATCC 19707 / BCRC 17464 / JCM 30415 / NCIMB 11848 / C-107) protein is Co-chaperonin GroES.